Here is a 291-residue protein sequence, read N- to C-terminus: ATP synthase gamma chain (291 aa).

The protein belongs to the ATPase gamma chain family. In terms of assembly, F-type ATPases have 2 components, CF(1) - the catalytic core - and CF(0) - the membrane proton channel. CF(1) has five subunits: alpha(3), beta(3), gamma(1), delta(1), epsilon(1). CF(0) has three main subunits: a, b and c.

The protein resides in the cell inner membrane. Its function is as follows. Produces ATP from ADP in the presence of a proton gradient across the membrane. The gamma chain is believed to be important in regulating ATPase activity and the flow of protons through the CF(0) complex. This Aquifex aeolicus (strain VF5) protein is ATP synthase gamma chain.